Here is a 389-residue protein sequence, read N- to C-terminus: MACPYRSSAYTNGDHAQKGEVLGSEMGMLYGEYLMLNQIINSQRMQSVVSNRPVHDEHLFIITHQAYELWFKQIIYELDSIRDLFNTITVDESRTLDILKRLNRIVMILKLLVDHIPILETMTPLDFMDFRGYLSPASGFQSLQFRLLENKLGVKQEHRVKYNQKYQDVFGDDAKSLDMLTASEDEPSLCDLVQKWLERTPGLEESGFNFYQKFRSNVYELLDREEQKAKMQPLEHIRNYQLMDIKKRRDVYHTIFNEDAHEALVSRGERKFSYKAMQGAILITLYRDEPRFSQPHQLLNCLMDIDSFMTKWRYNHVMMVQRMIGSQQLGTGGSSGYQYLRSTLSDRYKVSLDLFNLSTFLIPRSNIPPLTEEMSNQLNTNTRTIKPTN.

Residues 60-64 (FIITH) and Arg131 contribute to the substrate site. Residue His316 coordinates heme. Substrate is bound at residue Thr331.

It belongs to the tryptophan 2,3-dioxygenase family. In terms of assembly, homotetramer. Dimer of dimers. It depends on heme as a cofactor.

It carries out the reaction L-tryptophan + O2 = N-formyl-L-kynurenine. The protein operates within amino-acid degradation; L-tryptophan degradation via kynurenine pathway; L-kynurenine from L-tryptophan: step 1/2. Its pathway is pigment biosynthesis; ommochrome biosynthesis. Heme-dependent dioxygenase that catalyzes the oxidative cleavage of the L-tryptophan (L-Trp) pyrrole ring and converts L-tryptophan to N-formyl-L-kynurenine. Catalyzes the oxidative cleavage of the indole moiety. This chain is Tryptophan 2,3-dioxygenase, found in Mayetiola destructor (Hessian fly).